We begin with the raw amino-acid sequence, 160 residues long: Transcription elongation factor GreA (160 aa).

A coiled-coil region spans residues Ala-50 to Ser-70.

Belongs to the GreA/GreB family.

Necessary for efficient RNA polymerase transcription elongation past template-encoded arresting sites. The arresting sites in DNA have the property of trapping a certain fraction of elongating RNA polymerases that pass through, resulting in locked ternary complexes. Cleavage of the nascent transcript by cleavage factors such as GreA or GreB allows the resumption of elongation from the new 3'terminus. GreA releases sequences of 2 to 3 nucleotides. In Legionella pneumophila (strain Paris), this protein is Transcription elongation factor GreA.